A 165-amino-acid chain; its full sequence is MIEYRTVDSPIGLLTLAGRDPVLTNLRMVDQTYEPSRTGWTENPRAFAGAVEQLGAYFAGELTEFDIELDLRGSEFQRRVWRALQTIPYGETRSYGEIAEQIGAPGAARAVGLANGHNPIAIVVPCHRVIGASGKLTGYGGGLDRKQTLLALERRHSPASLTLFD.

The active-site Nucleophile; methyl group acceptor is the C126.

Belongs to the MGMT family.

Its subcellular location is the cytoplasm. It carries out the reaction a 6-O-methyl-2'-deoxyguanosine in DNA + L-cysteinyl-[protein] = S-methyl-L-cysteinyl-[protein] + a 2'-deoxyguanosine in DNA. It catalyses the reaction a 4-O-methyl-thymidine in DNA + L-cysteinyl-[protein] = a thymidine in DNA + S-methyl-L-cysteinyl-[protein]. Functionally, involved in the cellular defense against the biological effects of O6-methylguanine (O6-MeG) and O4-methylthymine (O4-MeT) in DNA. Repairs the methylated nucleobase in DNA by stoichiometrically transferring the methyl group to a cysteine residue in the enzyme. This is a suicide reaction: the enzyme is irreversibly inactivated. The chain is Methylated-DNA--protein-cysteine methyltransferase from Mycolicibacterium paratuberculosis (strain ATCC BAA-968 / K-10) (Mycobacterium paratuberculosis).